A 192-amino-acid polypeptide reads, in one-letter code: 7-methyl-GTP pyrophosphatase (192 aa).

Asp-69 serves as the catalytic Proton acceptor.

Belongs to the Maf family. YceF subfamily. Requires a divalent metal cation as cofactor.

It localises to the cytoplasm. The catalysed reaction is N(7)-methyl-GTP + H2O = N(7)-methyl-GMP + diphosphate + H(+). Nucleoside triphosphate pyrophosphatase that hydrolyzes 7-methyl-GTP (m(7)GTP). May have a dual role in cell division arrest and in preventing the incorporation of modified nucleotides into cellular nucleic acids. The sequence is that of 7-methyl-GTP pyrophosphatase from Pseudomonas savastanoi pv. phaseolicola (strain 1448A / Race 6) (Pseudomonas syringae pv. phaseolicola (strain 1448A / Race 6)).